Consider the following 436-residue polypeptide: GTPase Der (436 aa).

EngA-type G domains lie at 4-167 and 176-351; these read SVVA…PNES and IYFS…ESHT. GTP contacts are provided by residues 10–17, 57–61, 119–122, 182–189, 229–233, and 294–297; these read GRPNVGKS, DTGGI, NKMD, DTAGM, and NKWD. One can recognise a KH-like domain in the interval 352 to 436; that stretch reads KRIPTNVLND…PIKLFARRRQ (85 aa).

Belongs to the TRAFAC class TrmE-Era-EngA-EngB-Septin-like GTPase superfamily. EngA (Der) GTPase family. As to quaternary structure, associates with the 50S ribosomal subunit.

GTPase that plays an essential role in the late steps of ribosome biogenesis. This Oceanobacillus iheyensis (strain DSM 14371 / CIP 107618 / JCM 11309 / KCTC 3954 / HTE831) protein is GTPase Der.